Reading from the N-terminus, the 310-residue chain is Aspartate carbamoyltransferase catalytic subunit (310 aa).

The carbamoyl phosphate site is built by arginine 58 and threonine 59. Lysine 86 contributes to the L-aspartate binding site. The carbamoyl phosphate site is built by arginine 108, histidine 137, and glutamine 140. Residues arginine 170 and arginine 225 each coordinate L-aspartate. Residues glycine 264 and proline 265 each contribute to the carbamoyl phosphate site.

The protein belongs to the aspartate/ornithine carbamoyltransferase superfamily. ATCase family. Heterododecamer (2C3:3R2) of six catalytic PyrB chains organized as two trimers (C3), and six regulatory PyrI chains organized as three dimers (R2).

It carries out the reaction carbamoyl phosphate + L-aspartate = N-carbamoyl-L-aspartate + phosphate + H(+). It participates in pyrimidine metabolism; UMP biosynthesis via de novo pathway; (S)-dihydroorotate from bicarbonate: step 2/3. Its function is as follows. Catalyzes the condensation of carbamoyl phosphate and aspartate to form carbamoyl aspartate and inorganic phosphate, the committed step in the de novo pyrimidine nucleotide biosynthesis pathway. The polypeptide is Aspartate carbamoyltransferase catalytic subunit (Coxiella burnetii (strain CbuG_Q212) (Coxiella burnetii (strain Q212))).